Here is a 188-residue protein sequence, read N- to C-terminus: FMN-dependent NADPH-azoreductase (188 aa).

Belongs to the azoreductase type 2 family. Homotetramer. Requires FMN as cofactor.

Functionally, catalyzes the reductive cleavage of azo bond in aromatic azo compounds to the corresponding amines. Requires NADPH, but not NADH, as an electron donor for its activity. This chain is FMN-dependent NADPH-azoreductase (azo1), found in Staphylococcus aureus (strain MSSA476).